Consider the following 671-residue polypeptide: METSRSRGGGGAVSERGGAGASVGVCRRKAEAGAGTGTLAADMDLHCDCAAETPAAEPPSGKINKAAFKLFKKRKSGGTMPSIFGVKNKGDGKSSGPTGLVRSRTHDGLAEVLVLESGRKEEPRGGGDSGGGGGGRPNPGPPRAAGPGGGSLASSSVAKSHSFFSLLKKNGRSENGKGEPVDASKAGGKQKRGLRGLFSGMRWHRKDKRAKAEAAEGRAPGGGLILPGSLTASLECVKEETPRAAREPEEPSQDAPRDPAGEPAGGEEVPAPADRAPARSCREAEGLAHPGDTGARGEDAAGHRRAEPGPGEVRTAEDASRTGAVPVKTVPLVDSEGGSGRAPAAPDPASVDPPSDPSADRICLMFSDVTSLKSFDSLTGCGDIIADQEEEAGPSCDKHVPGPGKPALSKKNPGVVAYQGGGEEMASPDEVDDTYLQEFWDMLSQTEEQGPEPQEGAAKVAAALETKVVPETPKDTRCVEAAKDASSVKRRRLNRIPIEPHPKEEPKHPEKEQQEGVPNSDEGYWDSTTPGPEEDSSSSGKKAGIPRDSYSGDALYDLYADPDGSPATLPGGKDNEETSSLSRLKPVSPGTITCPLRTPGSLLKDSKIPISIKHLTNLPSSHPVVHQQPSRSEMPRTKIPVSKVLVRRVSNRGLAGTTIRATACHDSAKKL.

Disordered regions lie at residues 1–24 (METSRSRGGGGAVSERGGAGASVG), 76–358 (SGGT…SDPS), 391–414 (EAGPSCDKHVPGPGKPALSKKNPG), and 444–598 (SQTE…PLRT). Composition is skewed to gly residues over residues 7–21 (RGGGGAVSERGGAGA) and 126–137 (GGDSGGGGGGRP). Residue serine 162 is modified to Phosphoserine. Basic and acidic residues predominate over residues 171–182 (GRSENGKGEPVD). Phosphoserine is present on residues serine 229 and serine 233. Basic and acidic residues-rich tracts occupy residues 236–260 (CVKEETPRAAREPEEPSQDAPRDPA), 276–286 (APARSCREAEG), and 295–307 (ARGEDAAGHRRAE). Positions 342-353 (APAAPDPASVDP) are enriched in low complexity. A phosphoserine mark is found at serine 355 and serine 358. Positions 447–458 (EEQGPEPQEGAA) are enriched in low complexity. Basic and acidic residues-rich tracts occupy residues 472–487 (TPKDTRCVEAAKDASS) and 498–514 (IEPHPKEEPKHPEKEQQ).

This sequence belongs to the Amer family. As to quaternary structure, interacts with APC.

It is found in the cell membrane. Its function is as follows. Negative regulator of the canonical Wnt signaling pathway involved in neuroectodermal patterning. Acts by specifically binding phosphatidylinositol 4,5-bisphosphate (PtdIns(4,5)P2), translocating to the cell membrane and interacting with key regulators of the canonical Wnt signaling pathway, such as components of the beta-catenin destruction complex. This chain is APC membrane recruitment protein 2 (AMER2), found in Homo sapiens (Human).